A 131-amino-acid chain; its full sequence is Profilin (131 aa).

The protein belongs to the profilin family. In terms of assembly, occurs in many kinds of cells as a complex with monomeric actin in a 1:1 ratio.

The protein localises to the cytoplasm. It is found in the cytoskeleton. In terms of biological role, binds to actin and affects the structure of the cytoskeleton. At high concentrations, profilin prevents the polymerization of actin, whereas it enhances it at low concentrations. Has a high affinity for poly-proline. The sequence is that of Profilin from Citrullus lanatus (Watermelon).